The following is a 544-amino-acid chain: Glucose starvation modulator protein 1 (544 aa).

Residues 20–48 (CVFCHSKHLQCSNERPCKNCMKRNLGDQC) constitute a DNA-binding region (zn(2)-C6 fungal-type). The interval 65-93 (KKMKSRTNSISSSYRSPSVSESPQNPYTH) is disordered. Residues 70–86 (RTNSISSSYRSPSVSES) show a composition bias toward low complexity. A PAS domain is found at 403–475 (SLIDYEKLLL…FKLFKSVAVG (73 aa)).

Belongs to the ERT1/acuK family.

The protein resides in the nucleus. In terms of biological role, transcription factor which regulates nonfermentable carbon utilization. This is Glucose starvation modulator protein 1 (GSM1) from Debaryomyces hansenii (strain ATCC 36239 / CBS 767 / BCRC 21394 / JCM 1990 / NBRC 0083 / IGC 2968) (Yeast).